The chain runs to 254 residues: Phosphoglycerate mutase 1 (254 aa).

Residues 10–17 (RHGESAWN) and 23–24 (SG) contribute to the substrate site. Catalysis depends on His-11, which acts as the Tele-phosphohistidine intermediate. Phosphoserine is present on residues Ser-14 and Ser-23. Phosphotyrosine is present on Tyr-26. Phosphoserine is present on Ser-31. Residues Arg-62, 89 to 92 (ERHY), and Lys-100 each bind substrate. Residue Glu-89 is the Proton donor/acceptor of the active site. N6-acetyllysine is present on Lys-106. Substrate is bound at residue 116–117 (RR). Position 118 is a phosphoserine (Ser-118). Position 187-188 (187-188 (GN)) interacts with substrate. Residue Lys-251 is modified to N6-acetyllysine; alternate. Lys-251 is subject to N6-succinyllysine; alternate. 2 positions are modified to N6-acetyllysine: Lys-253 and Lys-254.

It belongs to the phosphoglycerate mutase family. BPG-dependent PGAM subfamily. Homodimer. Post-translationally, acetylated at Lys-253, Lys-253 and Lys-254 under high glucose condition. Acetylation increases catalytic activity. Under glucose restriction SIRT1 levels dramatically increase and it deacetylates the enzyme. In terms of tissue distribution, expressed in the liver and brain. Not found in the muscle.

The enzyme catalyses (2R)-2-phosphoglycerate = (2R)-3-phosphoglycerate. It carries out the reaction (2R)-3-phospho-glyceroyl phosphate = (2R)-2,3-bisphosphoglycerate + H(+). Catalyzes the interconversion of 2-phosphoglycerate and 3-phosphoglyceratea crucial step in glycolysis, by using 2,3-bisphosphoglycerate. Also catalyzes the interconversion of (2R)-2,3-bisphosphoglycerate and (2R)-3-phospho-glyceroyl phosphate. This Homo sapiens (Human) protein is Phosphoglycerate mutase 1.